The sequence spans 205 residues: Imidazoleglycerol-phosphate dehydratase (205 aa).

The tract at residues 1 to 27 (MKQASPRAGGAKARRGQVARKTKETDV) is disordered.

The protein belongs to the imidazoleglycerol-phosphate dehydratase family.

It is found in the cytoplasm. It carries out the reaction D-erythro-1-(imidazol-4-yl)glycerol 3-phosphate = 3-(imidazol-4-yl)-2-oxopropyl phosphate + H2O. The protein operates within amino-acid biosynthesis; L-histidine biosynthesis; L-histidine from 5-phospho-alpha-D-ribose 1-diphosphate: step 6/9. The chain is Imidazoleglycerol-phosphate dehydratase from Anaeromyxobacter sp. (strain Fw109-5).